The following is a 156-amino-acid chain: Cyanate hydratase (156 aa).

Residues Arg96, Glu99, and Ser122 contribute to the active site.

This sequence belongs to the cyanase family.

It catalyses the reaction cyanate + hydrogencarbonate + 3 H(+) = NH4(+) + 2 CO2. Its function is as follows. Catalyzes the reaction of cyanate with bicarbonate to produce ammonia and carbon dioxide. This chain is Cyanate hydratase, found in Burkholderia lata (strain ATCC 17760 / DSM 23089 / LMG 22485 / NCIMB 9086 / R18194 / 383).